A 242-amino-acid chain; its full sequence is Uridylate kinase (242 aa).

ATP is bound at residue 15 to 18; sequence KLSG. UMP is bound at residue glycine 57. Positions 58 and 62 each coordinate ATP. UMP contacts are provided by residues aspartate 78 and 139 to 146; that span reads TGNPFFTT. ATP-binding residues include threonine 166, tyrosine 172, and aspartate 175.

It belongs to the UMP kinase family. As to quaternary structure, homohexamer.

It localises to the cytoplasm. It catalyses the reaction UMP + ATP = UDP + ADP. It functions in the pathway pyrimidine metabolism; CTP biosynthesis via de novo pathway; UDP from UMP (UMPK route): step 1/1. Its activity is regulated as follows. Inhibited by UTP. Functionally, catalyzes the reversible phosphorylation of UMP to UDP. This is Uridylate kinase from Acinetobacter baylyi (strain ATCC 33305 / BD413 / ADP1).